A 172-amino-acid polypeptide reads, in one-letter code: C-phycocyanin beta subunit (172 aa).

Residue Asn-72 is modified to N4-methylasparagine. (2R,3E)-phycocyanobilin contacts are provided by Cys-82 and Cys-153.

The protein belongs to the phycobiliprotein family. As to quaternary structure, the alpha and beta subunits exhibit high affinity for one another and form heterodimers. These heterodimers form heterohexamers of 3 alpha and 3 beta subunits which, in turn, aggregate into a heterododecamer consisting of 2 heterohexamers. Post-translationally, contains two covalently linked bilin chromophores.

It localises to the cellular thylakoid membrane. Its function is as follows. Light-harvesting photosynthetic bile pigment-protein from the phycobiliprotein complex (phycobilisome, PBS). Phycocyanin is the major phycobiliprotein in the PBS rod. The sequence is that of C-phycocyanin beta subunit (cpcB) from Arthrospira platensis (Spirulina platensis).